The primary structure comprises 1058 residues: MRRKGRCHRGSAARHPSSPCSIKHSPTRETLTYAQAQRMVEIEIEGRLHRISIFDPLEIILEDDLTAQEMSECNSNKENSERPPVCLRTKRHKNNRVKKKNEVLPSTHGTPASASALPEPKVRIVEYSPPSAPRRPPVYYKFIEKSAEELDNEVEYDMDEEDYAWLEIINEKRKGDCVSAVSQNMFEFLMDRFEKESYCENQKQGEQQSLIDEDAVCCICMDGECQNSNVILFCDMCNLAVHQECYGVPYIPEGQWLCRHCLQSRARPADCVLCPNKGGAFKKTDDDRWGHVVCALWIPEVGFANTVFIEPIDGVRNIPPARWKLTCYLCKQKGVGACIQCHKANCYTAFHVTCAQKAGLYMKMEPVKELTGGSATFSVRKTAYCDVHTPPGCTRRPLNIYGDVEMKNGVCRKESSVKTVRSTSKVRKKAKKAKKTLAEPCAVLPTVCAPYIPPQRLNRIANQVAIQRKKQFVERAHSYWLLKRLSRNGAPLLRRLQSSLQSQRNTQQRENDEEMKAAKEKLKYWQRLRHDLERARLLIELLRKREKLKREQVKVEQMAMELRLTPLTVLLRSVLEQLQEKDPAKIFAQPVSLKEVPDYLDHIKHPMDFATMRKRLEAQGYKNLHAFEEDFNLIVDNCMKYNAKDTVFYRAAVRLRDQGGVVLRQARREVESIGLEEASGMHLPERPIAAPRRPFSWEEVDRLLDPANRAHMSLEEQLRELLDKLDLTCSMKSSGSRSKRAKLLKKEIALLRNKLSQQHSQAPPTGAGTGGFEDEAAPLAPDTAEEVLPRLETLLQPRKRSRSTCGDSEVEEESPGKRLDTGLTNGFGGARSEQEPGGGPGRKAAPRRRCASESSICSSNSPLCDSSFSTPKCGRGKPALVRRHTLEDRSELISCIENGNYAKAARIAAEVGQSNMWISTDAAASVLEPLKVVWAKCSGYPSYPALIIDPKMPRVPGHHNGVTIPAPPLDVLKIGEHMQTKSEEKLFLVLFFDNKRSWQWLPKSKMVPLGVDETIDKLKMMEGRNSSIRKAVRIAFDRAMNHLSRVHGEPASDLSDID.

The segment covering 1-12 (MRRKGRCHRGSA) has biased composition (basic residues). The segment at 1–25 (MRRKGRCHRGSAARHPSSPCSIKHS) is disordered. The tract at residues 31 to 80 (LTYAQAQRMVEIEIEGRLHRISIFDPLEIILEDDLTAQEMSECNSNKENS) is interaction with KAT7/HBO1 and histones. Position 128 is a phosphoserine (Ser128). The PHD-type 1 zinc finger occupies 214 to 264 (DAVCCICMDGECQNSNVILFCDMCNLAVHQECYGVPYIPEGQWLCRHCLQS). The segment at 268 to 301 (PADCVLCPNKGGAFKKTDDDRWGHVVCALWIPEV) adopts a C2HC pre-PHD-type zinc-finger fold. A PHD-type 2 zinc finger spans residues 325–389 (LTCYLCKQKG…RKTAYCDVHT (65 aa)). Lys368, Lys516, and Lys519 each carry N6-acetyllysine. Residues Lys554 and Lys594 each participate in a glycyl lysine isopeptide (Lys-Gly) (interchain with G-Cter in SUMO2) cross-link. The Bromo domain occupies 562–666 (LRLTPLTVLL…DQGGVVLRQA (105 aa)). Polar residues predominate over residues 754-763 (KLSQQHSQAP). 2 disordered regions span residues 754-776 (KLSQ…EDEA) and 791-847 (LETL…AAPR). Ser803 carries the post-translational modification Phosphoserine. At Lys903 the chain carries N6-acetyllysine. The PWWP domain occupies 929–1012 (PLKVVWAKCS…KSKMVPLGVD (84 aa)). A phosphoserine mark is found at Ser1052 and Ser1055.

As to quaternary structure, component of some HBO1 complexes composed of KAT7/HBO1, MEAF6, ING4 and BRD1/BRPF2. Component of the MOZ/MORF complex composed at least of ING5, KAT6A, KAT6B, MEAF6 and one of BRPF1, BRD1/BRPF2 and BRPF3. Interacts (via PHD-type zinc finger domain) with unmodified histone H3. Interacts (via PWWP domain) with dimethylated and trimethylated 'Lys-79' on histone H3.

The protein localises to the nucleus. The protein resides in the chromosome. Its function is as follows. Scaffold subunit of various histone acetyltransferase (HAT) complexes, such as the MOZ/MORF and HBO1 complexes, that acts as a regulator of hematopoiesis. Plays a key role in HBO1 complex by directing KAT7/HBO1 specificity towards histone H3 'Lys-14' acetylation (H3K14ac), thereby promoting erythroid differentiation. This chain is Bromodomain-containing protein 1, found in Mus musculus (Mouse).